A 69-amino-acid polypeptide reads, in one-letter code: Sperm protamine P1 (69 aa).

Basic residues-rich tracts occupy residues 1–30 and 37–69; these read MARFRPSRSRSRSLYRRRRRSRRQRSRRGG and KITRRGRGRGKSRRRRGRRSMRSSRRRRRRRRN. The tract at residues 1 to 69 is disordered; sequence MARFRPSRSR…SRRRRRRRRN (69 aa).

The protein belongs to the protamine P1 family. In terms of tissue distribution, testis.

It is found in the nucleus. The protein resides in the chromosome. In terms of biological role, protamines substitute for histones in the chromatin of sperm during the haploid phase of spermatogenesis. They compact sperm DNA into a highly condensed, stable and inactive complex. The polypeptide is Sperm protamine P1 (PRM1) (Tachyglossus aculeatus aculeatus (Southeast Australian short-beaked echidna)).